The chain runs to 345 residues: Heat-inducible transcription repressor HrcA (345 aa).

Belongs to the HrcA family.

In terms of biological role, negative regulator of class I heat shock genes (grpE-dnaK-dnaJ and groELS operons). Prevents heat-shock induction of these operons. The chain is Heat-inducible transcription repressor HrcA from Lachnoclostridium phytofermentans (strain ATCC 700394 / DSM 18823 / ISDg) (Clostridium phytofermentans).